The sequence spans 526 residues: Non-reducing end alpha-L-arabinofuranosidase BoGH43A (526 aa).

The N-terminal stretch at 1–20 (MRNALFLIFISLCSVCKSSA) is a signal peptide. Asp-34 functions as the Proton acceptor in the catalytic mechanism. Glu-189 acts as the Proton donor in catalysis.

This sequence belongs to the glycosyl hydrolase 43 family.

Its subcellular location is the periplasm. The enzyme catalyses Hydrolysis of terminal non-reducing alpha-L-arabinofuranoside residues in alpha-L-arabinosides.. Its pathway is glucan metabolism; xyloglucan degradation. Alpha-L-arabinofuranosidase involved in xyloglucan degradation by mediating the cleavage of terminal non-reducing alpha-L-arabinofuranoside residues in xyloglucan branches, converting the 'S' units to 'X' units. The sequence is that of Non-reducing end alpha-L-arabinofuranosidase BoGH43A from Bacteroides ovatus (strain ATCC 8483 / DSM 1896 / JCM 5824 / BCRC 10623 / CCUG 4943 / NCTC 11153).